The following is a 125-amino-acid chain: Large ribosomal subunit protein bL12 (125 aa).

The protein belongs to the bacterial ribosomal protein bL12 family. Homodimer. Part of the ribosomal stalk of the 50S ribosomal subunit. Forms a multimeric L10(L12)X complex, where L10 forms an elongated spine to which 2 to 4 L12 dimers bind in a sequential fashion. Binds GTP-bound translation factors.

In terms of biological role, forms part of the ribosomal stalk which helps the ribosome interact with GTP-bound translation factors. Is thus essential for accurate translation. The protein is Large ribosomal subunit protein bL12 of Thermoanaerobacter sp. (strain X514).